The primary structure comprises 371 residues: Aromatic peroxygenase (371 aa).

The N-terminal stretch at 1 to 18 (MKYFPLFPTLVFAARVVA) is a signal peptide. Positions 19–43 (FPAYASLAGLSQQELDAIIPTLEAR) are excised as a propeptide. Residue asparagine 54 is glycosylated (N-linked (GlcNAc...) asparagine). Cysteine 79 contacts heme. Residues asparagine 184, asparagine 204, asparagine 225, and asparagine 329 are each glycosylated (N-linked (GlcNAc...) asparagine). Cysteine 321 and cysteine 362 form a disulfide bridge.

Belongs to the chloroperoxidase family. Heme b is required as a cofactor. Post-translationally, N-glycosylated.

It carries out the reaction RH + H2O2 = ROH + H2O.. In terms of biological role, aromatic peroxidase that oxidizes aryl alcohols into the corresponding aldehydes and then into the corresponding benzoic acids. Oxidizes toluene and naphthalene. Catalyzes the regioselective peroxide-dependent hydroxylation of propranolol and diclofenac to 5-hydroxypropranolol and 4'-hydroxydiclofenac. Catalyzes the regioselective peroxide-dependent hydroxylation of naphthalene to 1-naphthol or 2-naphthol via a naphthalene 1,2-oxide intermediate. Catalyzes the regioselective peroxide-dependent oxidation of pyridine to pyridine N-oxide. Halogenates monochlorodimedone and phenol. Oxidizes the sulfur-containing heterocycle dibenzothiophene to yield ring-hydroxylation products and to a lesser extent sulfoxidation products. This chain is Aromatic peroxygenase, found in Cyclocybe aegerita (Black poplar mushroom).